The sequence spans 352 residues: RNA 3'-terminal phosphate cyclase (352 aa).

ATP-binding positions include Q100 and H297–Q301. The active-site Tele-AMP-histidine intermediate is H322.

It belongs to the RNA 3'-terminal cyclase family. Type 1 subfamily.

It localises to the cytoplasm. The enzyme catalyses a 3'-end 3'-phospho-ribonucleotide-RNA + ATP = a 3'-end 2',3'-cyclophospho-ribonucleotide-RNA + AMP + diphosphate. Functionally, catalyzes the conversion of 3'-phosphate to a 2',3'-cyclic phosphodiester at the end of RNA. The mechanism of action of the enzyme occurs in 3 steps: (A) adenylation of the enzyme by ATP; (B) transfer of adenylate to an RNA-N3'P to produce RNA-N3'PP5'A; (C) and attack of the adjacent 2'-hydroxyl on the 3'-phosphorus in the diester linkage to produce the cyclic end product. The biological role of this enzyme is unknown but it is likely to function in some aspects of cellular RNA processing. This is RNA 3'-terminal phosphate cyclase from Methanosarcina mazei (strain ATCC BAA-159 / DSM 3647 / Goe1 / Go1 / JCM 11833 / OCM 88) (Methanosarcina frisia).